Consider the following 291-residue polypeptide: ATP synthase gamma chain (291 aa).

This sequence belongs to the ATPase gamma chain family. As to quaternary structure, F-type ATPases have 2 components, CF(1) - the catalytic core - and CF(0) - the membrane proton channel. CF(1) has five subunits: alpha(3), beta(3), gamma(1), delta(1), epsilon(1). CF(0) has three main subunits: a, b and c.

Its subcellular location is the cell inner membrane. Functionally, produces ATP from ADP in the presence of a proton gradient across the membrane. The gamma chain is believed to be important in regulating ATPase activity and the flow of protons through the CF(0) complex. The polypeptide is ATP synthase gamma chain (Verminephrobacter eiseniae (strain EF01-2)).